Here is a 42-residue protein sequence, read N- to C-terminus: MKVIGSLKSAKVRDKDCRIVRRKGRIYVINKKNPRFKARQGY.

This sequence belongs to the bacterial ribosomal protein bL36 family.

This is Large ribosomal subunit protein bL36 from Ehrlichia canis (strain Jake).